A 791-amino-acid polypeptide reads, in one-letter code: Endonuclease MutS2 (791 aa).

339-346 (GPNTGGKT) serves as a coordination point for ATP. Positions 715–790 (LDLRGERYET…GSGVTIADLK (76 aa)) constitute a Smr domain.

This sequence belongs to the DNA mismatch repair MutS family. MutS2 subfamily. As to quaternary structure, homodimer. Binds to stalled ribosomes, contacting rRNA.

In terms of biological role, endonuclease that is involved in the suppression of homologous recombination and thus may have a key role in the control of bacterial genetic diversity. Functionally, acts as a ribosome collision sensor, splitting the ribosome into its 2 subunits. Detects stalled/collided 70S ribosomes which it binds and splits by an ATP-hydrolysis driven conformational change. Acts upstream of the ribosome quality control system (RQC), a ribosome-associated complex that mediates the extraction of incompletely synthesized nascent chains from stalled ribosomes and their subsequent degradation. Probably generates substrates for RQC. The chain is Endonuclease MutS2 from Halothermothrix orenii (strain H 168 / OCM 544 / DSM 9562).